The following is a 268-amino-acid chain: Interleukin-1 alpha (268 aa).

A propeptide spanning residues 1–112 (MAKVPDLFED…NTEEEIIKPR (112 aa)) is cleaved from the precursor. Lys82 is subject to N6-acetyllysine. The nuclear localization signal (NLS) stretch occupies residues 82–86 (KKRRL). Ser87 carries the phosphoserine modification. N-linked (GlcNAc...) asparagine glycosylation is found at Asn102 and Asn141.

Belongs to the IL-1 family. Monomer. Interacts with TMED10; the interaction mediates the translocation from the cytoplasm into the ERGIC (endoplasmic reticulum-Golgi intermediate compartment) and thereby secretion. Interacts with IL1R1. Interacts with S100A13; this interaction is the first step in the export of IL1A, followed by direct translocation of this complex across the plasma membrane. In terms of processing, acetylated within its nuclear localization sequence, which impacts subcellular localization. Post-translationally, proteolytic processed by CAPN1 in a calcium-dependent manner. Cleavage from 31 kDa precursor to 18 kDa biologically active molecules. Phosphorylated. Phosphorylation greatly enhances susceptibility to digestion and promotes the conversion of pre-IL1A alpha to the biologically active IL1A.

The protein localises to the nucleus. It is found in the cytoplasm. Its subcellular location is the secreted. Functionally, cytokine constitutively present intracellularly in nearly all resting non-hematopoietic cells that plays an important role in inflammation and bridges the innate and adaptive immune systems. After binding to its receptor IL1R1 together with its accessory protein IL1RAP, forms the high affinity interleukin-1 receptor complex. Signaling involves the recruitment of adapter molecules such as MYD88, IRAK1 or IRAK4. In turn, mediates the activation of NF-kappa-B and the three MAPK pathways p38, p42/p44 and JNK pathways. Within the cell, acts as an alarmin and cell death results in its liberation in the extracellular space after disruption of the cell membrane to induce inflammation and alert the host to injury or damage. In addition to its role as a danger signal, which occurs when the cytokine is passively released by cell necrosis, directly senses DNA damage and acts as signal for genotoxic stress without loss of cell integrity. This chain is Interleukin-1 alpha (IL1A), found in Bubalus carabanensis (Swamp type water buffalo).